Reading from the N-terminus, the 206-residue chain is N-(5'-phosphoribosyl)anthranilate isomerase (206 aa).

Belongs to the TrpF family.

The catalysed reaction is N-(5-phospho-beta-D-ribosyl)anthranilate = 1-(2-carboxyphenylamino)-1-deoxy-D-ribulose 5-phosphate. Its pathway is amino-acid biosynthesis; L-tryptophan biosynthesis; L-tryptophan from chorismate: step 3/5. This Pseudomonas putida (strain GB-1) protein is N-(5'-phosphoribosyl)anthranilate isomerase.